Here is a 548-residue protein sequence, read N- to C-terminus: Probable 2,3-bisphosphoglycerate-independent phosphoglycerate mutase (548 aa).

Mn(2+) is bound by residues Asp20 and Ser73. Residue Ser73 is the Phosphoserine intermediate of the active site. Residues His134, 164–165 (RD), Arg200, Arg207, 279–282 (RGDR), and Lys354 contribute to the substrate site. The Mn(2+) site is built by Asp422, His426, Asp463, His464, and His493.

It belongs to the BPG-independent phosphoglycerate mutase family. Monomer. The cofactor is Mn(2+).

It carries out the reaction (2R)-2-phosphoglycerate = (2R)-3-phosphoglycerate. It participates in carbohydrate degradation; glycolysis; pyruvate from D-glyceraldehyde 3-phosphate: step 3/5. Catalyzes the interconversion of 2-phosphoglycerate and 3-phosphoglycerate. The sequence is that of Probable 2,3-bisphosphoglycerate-independent phosphoglycerate mutase (gpmI) from Leptospira interrogans serogroup Icterohaemorrhagiae serovar Lai (strain 56601).